A 134-amino-acid polypeptide reads, in one-letter code: Profilin-1 (134 aa).

Cysteines 13 and 118 form a disulfide. An Involved in PIP2 interaction motif is present at residues alanine 84–threonine 100. Phosphothreonine is present on threonine 114.

The protein belongs to the profilin family. As to quaternary structure, occurs in many kinds of cells as a complex with monomeric actin in a 1:1 ratio. Phosphorylated by MAP kinases.

It localises to the cytoplasm. The protein localises to the cytoskeleton. Its function is as follows. Binds to actin and affects the structure of the cytoskeleton. At high concentrations, profilin prevents the polymerization of actin, whereas it enhances it at low concentrations. This Olea europaea (Common olive) protein is Profilin-1.